The sequence spans 72 residues: MFIDELSPIFKQLVQHPASFLGGFASGVLRLNLADDPVKSWLDKQRGVNSYSFPVTDAHNGKASGPQSISID.

Belongs to the UPF0426 family.

The chain is UPF0426 protein asl4034 from Nostoc sp. (strain PCC 7120 / SAG 25.82 / UTEX 2576).